Reading from the N-terminus, the 191-residue chain is Orotate phosphoribosyltransferase (191 aa).

116-124 (EDVVTTGGS) serves as a coordination point for 5-phospho-alpha-D-ribose 1-diphosphate. 2 residues coordinate orotate: Thr120 and Arg148.

It belongs to the purine/pyrimidine phosphoribosyltransferase family. PyrE subfamily. As to quaternary structure, homodimer. It depends on Mg(2+) as a cofactor.

The catalysed reaction is orotidine 5'-phosphate + diphosphate = orotate + 5-phospho-alpha-D-ribose 1-diphosphate. It functions in the pathway pyrimidine metabolism; UMP biosynthesis via de novo pathway; UMP from orotate: step 1/2. In terms of biological role, catalyzes the transfer of a ribosyl phosphate group from 5-phosphoribose 1-diphosphate to orotate, leading to the formation of orotidine monophosphate (OMP). The protein is Orotate phosphoribosyltransferase of Carboxydothermus hydrogenoformans (strain ATCC BAA-161 / DSM 6008 / Z-2901).